Reading from the N-terminus, the 462-residue chain is tRNA modification GTPase MnmE (462 aa).

Positions 23, 88, and 127 each coordinate (6S)-5-formyl-5,6,7,8-tetrahydrofolate. A TrmE-type G domain is found at 224 to 383 (GLATVIIGRP…LEKAIADLFF (160 aa)). Position 234 (asparagine 234) interacts with K(+). Residues 234-239 (NVGKSS), 253-259 (TDIPGTT), and 278-281 (DTAG) each bind GTP. Residue serine 238 coordinates Mg(2+). K(+) is bound by residues threonine 253, isoleucine 255, and threonine 258. Threonine 259 is a Mg(2+) binding site. Lysine 462 serves as a coordination point for (6S)-5-formyl-5,6,7,8-tetrahydrofolate.

Belongs to the TRAFAC class TrmE-Era-EngA-EngB-Septin-like GTPase superfamily. TrmE GTPase family. As to quaternary structure, homodimer. Heterotetramer of two MnmE and two MnmG subunits. The cofactor is K(+).

The protein localises to the cytoplasm. Its function is as follows. Exhibits a very high intrinsic GTPase hydrolysis rate. Involved in the addition of a carboxymethylaminomethyl (cmnm) group at the wobble position (U34) of certain tRNAs, forming tRNA-cmnm(5)s(2)U34. The protein is tRNA modification GTPase MnmE of Geobacillus kaustophilus (strain HTA426).